The primary structure comprises 609 residues: Phosphoenolpyruvate carboxykinase [GTP] (609 aa).

Residues arginine 81 and 220–222 (YGG) each bind substrate. Mn(2+)-binding residues include lysine 229 and histidine 249. Serine 271 is a binding site for substrate. Position 272 to 277 (272 to 277 (ACGKTN)) interacts with GTP. Cysteine 273 is an active-site residue. Aspartate 296 is a binding site for Mn(2+). Substrate is bound at residue 387 to 389 (NSR). Residues arginine 389, arginine 420, and 515-518 (FGEN) contribute to the GTP site.

This sequence belongs to the phosphoenolpyruvate carboxykinase [GTP] family. As to quaternary structure, monomer. Mn(2+) serves as cofactor.

The protein resides in the cytoplasm. It carries out the reaction oxaloacetate + GTP = phosphoenolpyruvate + GDP + CO2. Its pathway is carbohydrate biosynthesis; gluconeogenesis. Its function is as follows. Catalyzes the conversion of oxaloacetate (OAA) to phosphoenolpyruvate (PEP), the rate-limiting step in the metabolic pathway that produces glucose from lactate and other precursors derived from the citric acid cycle. In Mycolicibacterium paratuberculosis (strain ATCC BAA-968 / K-10) (Mycobacterium paratuberculosis), this protein is Phosphoenolpyruvate carboxykinase [GTP].